The following is an 89-amino-acid chain: Small ribosomal subunit protein uS15 (89 aa).

The protein belongs to the universal ribosomal protein uS15 family. In terms of assembly, part of the 30S ribosomal subunit. Forms a bridge to the 50S subunit in the 70S ribosome, contacting the 23S rRNA.

One of the primary rRNA binding proteins, it binds directly to 16S rRNA where it helps nucleate assembly of the platform of the 30S subunit by binding and bridging several RNA helices of the 16S rRNA. In terms of biological role, forms an intersubunit bridge (bridge B4) with the 23S rRNA of the 50S subunit in the ribosome. The chain is Small ribosomal subunit protein uS15 from Chlorobium limicola (strain DSM 245 / NBRC 103803 / 6330).